The primary structure comprises 268 residues: Glucosamine-6-phosphate deaminase (268 aa).

The Proton acceptor; for enolization step role is filled by aspartate 67. Asparagine 136 serves as the catalytic For ring-opening step. Histidine 138 serves as the catalytic Proton acceptor; for ring-opening step. The active-site For ring-opening step is the glutamate 143.

The protein belongs to the glucosamine/galactosamine-6-phosphate isomerase family. NagB subfamily. Homohexamer.

The catalysed reaction is alpha-D-glucosamine 6-phosphate + H2O = beta-D-fructose 6-phosphate + NH4(+). It participates in amino-sugar metabolism; N-acetylneuraminate degradation; D-fructose 6-phosphate from N-acetylneuraminate: step 5/5. In terms of biological role, catalyzes the reversible isomerization-deamination of glucosamine 6-phosphate (GlcN6P) to form fructose 6-phosphate (Fru6P) and ammonium ion. This Shewanella loihica (strain ATCC BAA-1088 / PV-4) protein is Glucosamine-6-phosphate deaminase.